Here is a 309-residue protein sequence, read N- to C-terminus: Porphobilinogen deaminase (309 aa).

Cysteine 241 bears the S-(dipyrrolylmethanemethyl)cysteine mark.

This sequence belongs to the HMBS family. In terms of assembly, monomer. Requires dipyrromethane as cofactor.

The enzyme catalyses 4 porphobilinogen + H2O = hydroxymethylbilane + 4 NH4(+). The protein operates within porphyrin-containing compound metabolism; protoporphyrin-IX biosynthesis; coproporphyrinogen-III from 5-aminolevulinate: step 2/4. In terms of biological role, tetrapolymerization of the monopyrrole PBG into the hydroxymethylbilane pre-uroporphyrinogen in several discrete steps. The chain is Porphobilinogen deaminase from Bacillus mycoides (strain KBAB4) (Bacillus weihenstephanensis).